The chain runs to 252 residues: MLTKRIIPCLDVTAGRVVKGVNFVGLRDAGDPVEIARRYDSQGADELTFLDITATSDGRDLILHIIENVASQVFIPLTVGGGVRAVADVRRLLNAGADKVSMNSSAVANPDLVSDAAAYYGSQCIVVAIDAKQTEAGNWEVFTHGGRTATGMDVVEWAKEVAKRGAGEILLTSMNRDGSKDGFDLALTAAVSDAVSVPVIASGGVGNLQHLVDGITKGHADAVLAASIFHYGEYTVQEAKEYMAAQGVPVRI.

Catalysis depends on residues Asp-11 and Asp-130.

This sequence belongs to the HisA/HisF family. Heterodimer of HisH and HisF.

The protein localises to the cytoplasm. It carries out the reaction 5-[(5-phospho-1-deoxy-D-ribulos-1-ylimino)methylamino]-1-(5-phospho-beta-D-ribosyl)imidazole-4-carboxamide + L-glutamine = D-erythro-1-(imidazol-4-yl)glycerol 3-phosphate + 5-amino-1-(5-phospho-beta-D-ribosyl)imidazole-4-carboxamide + L-glutamate + H(+). It functions in the pathway amino-acid biosynthesis; L-histidine biosynthesis; L-histidine from 5-phospho-alpha-D-ribose 1-diphosphate: step 5/9. In terms of biological role, IGPS catalyzes the conversion of PRFAR and glutamine to IGP, AICAR and glutamate. The HisF subunit catalyzes the cyclization activity that produces IGP and AICAR from PRFAR using the ammonia provided by the HisH subunit. This Polynucleobacter asymbioticus (strain DSM 18221 / CIP 109841 / QLW-P1DMWA-1) (Polynucleobacter necessarius subsp. asymbioticus) protein is Imidazole glycerol phosphate synthase subunit HisF.